The sequence spans 388 residues: Putative 8-amino-7-oxononanoate synthase (388 aa).

Arg23 serves as a coordination point for substrate. 110 to 111 (GY) serves as a coordination point for pyridoxal 5'-phosphate. His135 contributes to the substrate binding site. Residues Ser182, 207 to 210 (DDAH), and 238 to 241 (TLSK) each bind pyridoxal 5'-phosphate. Position 241 is an N6-(pyridoxal phosphate)lysine (Lys241). Thr355 is a substrate binding site.

Belongs to the class-II pyridoxal-phosphate-dependent aminotransferase family. BioF subfamily. In terms of assembly, homodimer. Requires pyridoxal 5'-phosphate as cofactor.

The catalysed reaction is 6-carboxyhexanoyl-[ACP] + L-alanine + H(+) = (8S)-8-amino-7-oxononanoate + holo-[ACP] + CO2. It functions in the pathway cofactor biosynthesis; biotin biosynthesis. Catalyzes the decarboxylative condensation of pimeloyl-[acyl-carrier protein] and L-alanine to produce 8-amino-7-oxononanoate (AON), [acyl-carrier protein], and carbon dioxide. This is Putative 8-amino-7-oxononanoate synthase (bioF) from Thermodesulfovibrio yellowstonii (strain ATCC 51303 / DSM 11347 / YP87).